Consider the following 299-residue polypeptide: 4-hydroxy-tetrahydrodipicolinate synthase (299 aa).

Threonine 44 is a binding site for pyruvate. Residue tyrosine 133 is the Proton donor/acceptor of the active site. Lysine 162 functions as the Schiff-base intermediate with substrate in the catalytic mechanism. Isoleucine 204 is a pyruvate binding site.

The protein belongs to the DapA family. In terms of assembly, homotetramer; dimer of dimers.

Its subcellular location is the cytoplasm. It catalyses the reaction L-aspartate 4-semialdehyde + pyruvate = (2S,4S)-4-hydroxy-2,3,4,5-tetrahydrodipicolinate + H2O + H(+). It functions in the pathway amino-acid biosynthesis; L-lysine biosynthesis via DAP pathway; (S)-tetrahydrodipicolinate from L-aspartate: step 3/4. Catalyzes the condensation of (S)-aspartate-beta-semialdehyde [(S)-ASA] and pyruvate to 4-hydroxy-tetrahydrodipicolinate (HTPA). The chain is 4-hydroxy-tetrahydrodipicolinate synthase from Thermus thermophilus (strain ATCC BAA-163 / DSM 7039 / HB27).